A 230-amino-acid chain; its full sequence is Androgen-dependent TFPI-regulating protein (230 aa).

Topologically, residues 1–7 (MTKTTTC) are cytoplasmic. The helical transmembrane segment at 8–28 (LYHFVVLNWYIFLNYYIPQIG) threads the bilayer. Over 29-45 (KDEEKLKEFHDGGRSKY) the chain is Extracellular. The chain crosses the membrane as a helical span at residues 46-66 (LTLLNLLLQAVFFGVACLDDV). Residues 67–85 (LKRVIGRKDIKFITYFRDL) lie on the Cytoplasmic side of the membrane. A helical membrane pass occupies residues 86 to 106 (LFTTLAFPLSTFVFLVFWSLF). Residues 107–120 (HYDRSLVYPKGLDD) lie on the Extracellular side of the membrane. A helical transmembrane segment spans residues 121-141 (FFPAWVNHAMHTSIFPFSLAE). The Cytoplasmic portion of the chain corresponds to 142–155 (TVLRPHNYPSKKLG). A helical transmembrane segment spans residues 156 to 173 (LSLLGACNFAYIIRILWR). The Extracellular segment spans residues 174–190 (YVQTGNWVYPVFASLSP). The helical transmembrane segment at 191–211 (LGIILFFSASYILSASLYLFG) threads the bilayer. Residues 212-230 (EKINHWKWGATVKPRMKKN) are Cytoplasmic-facing.

This sequence belongs to the AIG1 family.

The protein localises to the cell membrane. It carries out the reaction 9-hexadecanoyloxy-octadecanoate + H2O = 9-hydroxy-octadecanoate + hexadecanoate + H(+). The enzyme catalyses 12-hexadecanoyloxy-octadecanoate + H2O = 12-hydroxyoctadecanoate + hexadecanoate + H(+). It catalyses the reaction 9-(9Z-hexadecenoyloxy)-octadecanoate + H2O = (9Z)-hexadecenoate + 9-hydroxy-octadecanoate + H(+). The catalysed reaction is 12-(9Z-hexadecenoyloxy)-octadecanoate + H2O = 12-hydroxyoctadecanoate + (9Z)-hexadecenoate + H(+). It carries out the reaction 13-(9Z-hexadecenoyloxy)-octadecanoate + H2O = 13-hydroxy-octadecanoate + (9Z)-hexadecenoate + H(+). The enzyme catalyses 9-octadecanoyloxy-octadecanoate + H2O = 9-hydroxy-octadecanoate + octadecanoate + H(+). It catalyses the reaction 12-octadecanoyloxy-octadecanoate + H2O = 12-hydroxyoctadecanoate + octadecanoate + H(+). The catalysed reaction is 13-octadecanoyloxy-octadecanoate + H2O = 13-hydroxy-octadecanoate + octadecanoate + H(+). It carries out the reaction 9-(9Z-octadecenoyloxy)-octadecanoate + H2O = 9-hydroxy-octadecanoate + (9Z)-octadecenoate + H(+). The enzyme catalyses 12-(9Z-octadecenoyloxy)-octadecanoate + H2O = 12-hydroxyoctadecanoate + (9Z)-octadecenoate + H(+). It catalyses the reaction 13-(9Z-octadecenoyloxy)-octadecanoate + H2O = 13-hydroxy-octadecanoate + (9Z)-octadecenoate + H(+). The catalysed reaction is 5-(9Z-octadecenoyloxy)-octadecanoate + H2O = 5-hydroxy-octadecanoate + (9Z)-octadecenoate + H(+). In terms of biological role, hydrolyzes bioactive fatty-acid esters of hydroxy-fatty acids (FAHFAs), but not other major classes of lipids. Shows a preference for FAHFAs with branching distal from the carboxylate head group of the lipids. Regulates the expression and the cell-associated anticoagulant activity of the inhibitor TFPI in endothelial cells (in vitro). The polypeptide is Androgen-dependent TFPI-regulating protein (Adtrp) (Rattus norvegicus (Rat)).